We begin with the raw amino-acid sequence, 456 residues long: Argininosuccinate lyase (456 aa).

The protein belongs to the lyase 1 family. Argininosuccinate lyase subfamily.

It is found in the cytoplasm. It catalyses the reaction 2-(N(omega)-L-arginino)succinate = fumarate + L-arginine. Its pathway is amino-acid biosynthesis; L-arginine biosynthesis; L-arginine from L-ornithine and carbamoyl phosphate: step 3/3. This chain is Argininosuccinate lyase, found in Listeria monocytogenes serotype 4a (strain HCC23).